A 518-amino-acid polypeptide reads, in one-letter code: ATP synthase F(1) complex catalytic subunit beta, mitochondrial (518 aa).

Gly-199, Val-200, Gly-201, Lys-202, Thr-203, and Val-204 together coordinate ADP. An ATP-binding site is contributed by Gly-199. Phosphate is bound by residues Gly-199, Val-200, Gly-201, Lys-202, and Thr-203. 4 residues coordinate ATP: Gly-201, Lys-202, Thr-203, and Val-204. Thr-203 contributes to the Mg(2+) binding site. Mg(2+) is bound at residue Glu-228. Position 229 (Arg-229) interacts with ATP.

This sequence belongs to the ATPase alpha/beta chains family. In terms of assembly, homotrimer. Component of the ATP synthase complex composed at least of ATP5F1A/subunit alpha, ATP5F1B/subunit beta, ATP5MC1/subunit c (homooctomer), MT-ATP6/subunit a, MT-ATP8/subunit 8, ATP5ME/subunit e, ATP5MF/subunit f, ATP5MG/subunit g, ATP5MK/subunit k, ATP5MJ/subunit j, ATP5F1C/subunit gamma, ATP5F1D/subunit delta, ATP5F1E/subunit epsilon, ATP5PF/subunit F6, ATP5PB/subunit b, ATP5PD/subunit d, ATP5PO/subunit OSCP. ATP synthase complex consists of a soluble F(1) head domain (subunits alpha(3) and beta(3)) - the catalytic core - and a membrane F(0) domain - the membrane proton channel (subunits c, a, 8, e, f, g, k and j). These two domains are linked by a central stalk (subunits gamma, delta, and epsilon) rotating inside the F1 region and a stationary peripheral stalk (subunits F6, b, d, and OSCP).

The protein localises to the mitochondrion inner membrane. The enzyme catalyses ATP + H2O + 4 H(+)(in) = ADP + phosphate + 5 H(+)(out). Its function is as follows. Catalytic subunit beta, of the mitochondrial membrane ATP synthase complex (F(1)F(0) ATP synthase or Complex V) that produces ATP from ADP in the presence of a proton gradient across the membrane which is generated by electron transport complexes of the respiratory chain. ATP synthase complex consist of a soluble F(1) head domain - the catalytic core - and a membrane F(1) domain - the membrane proton channel. These two domains are linked by a central stalk rotating inside the F(1) region and a stationary peripheral stalk. During catalysis, ATP synthesis in the catalytic domain of F(1) is coupled via a rotary mechanism of the central stalk subunits to proton translocation. In vivo, can only synthesize ATP although its ATP hydrolase activity can be activated artificially in vitro. With the subunit alpha (ATP5F1A), forms the catalytic core in the F(1) domain. In Cyprinus carpio (Common carp), this protein is ATP synthase F(1) complex catalytic subunit beta, mitochondrial.